We begin with the raw amino-acid sequence, 196 residues long: CRISPR-associated exonuclease Cas4 (196 aa).

Cys23 contributes to the [4Fe-4S] cluster binding site. 3 residues coordinate Mn(2+): His50, Asp90, and Glu103. [4Fe-4S] cluster is bound by residues Cys184, Cys187, and Cys193.

This sequence belongs to the CRISPR-associated exonuclease Cas4 family. The cofactor is Mg(2+). [4Fe-4S] cluster serves as cofactor.

The enzyme catalyses exonucleolytic cleavage in the 5'- to 3'-direction to yield nucleoside 3'-phosphates.. Functionally, CRISPR (clustered regularly interspaced short palindromic repeat) is an adaptive immune system that provides protection against mobile genetic elements (viruses, transposable elements and conjugative plasmids). CRISPR clusters contain sequences complementary to antecedent mobile elements and target invading nucleic acids. CRISPR clusters are transcribed and processed into CRISPR RNA (crRNA). This may be a 5' to 3' ssDNA exonuclease. The protein is CRISPR-associated exonuclease Cas4 of Francisella tularensis subsp. novicida (strain U112).